We begin with the raw amino-acid sequence, 185 residues long: NADH-dependent FMN reductase AsuE2 (185 aa).

Low complexity predominate over residues 1 to 13; that stretch reads MSTHTARRAGATA. The segment at 1–24 is disordered; sequence MSTHTARRAGATAGHDRDRGTEPG. Residues 14–24 show a composition bias toward basic and acidic residues; the sequence is GHDRDRGTEPG.

It belongs to the non-flavoprotein flavin reductase family. Does not interact with AsuE1, suggesting a possible transient interaction between the two enzymes instead of formation of a stable complex.

The catalysed reaction is FMNH2 + NAD(+) = FMN + NADH + 2 H(+). It participates in antibiotic biosynthesis. Its function is as follows. Involved in the biosynthesis of the antibiotic asukamycin. When flavin concentration is low, AsuE2 assists the protoasukamycin 4-monooxygenase AsuE1 by providing a reduced form of flavin, enhancing AsuE1 activity. This Streptomyces nodosus subsp. asukaensis protein is NADH-dependent FMN reductase AsuE2.